The chain runs to 245 residues: uncharacterized protein (245 aa).

This is an uncharacterized protein from Frog virus 3 (isolate Goorha) (FV-3).